The chain runs to 259 residues: Global transcriptional regulator CodY (259 aa).

A GAF domain region spans residues 1-155 (MNLLEKTRKI…GATVVGMEIL (155 aa)). Positions 203-222 (ASKIADRVGITRSVIVNALR) form a DNA-binding region, H-T-H motif. Residue S215 is modified to Phosphoserine.

The protein belongs to the CodY family.

The protein localises to the cytoplasm. Its function is as follows. DNA-binding global transcriptional regulator which is involved in the adaptive response to starvation and acts by directly or indirectly controlling the expression of numerous genes in response to nutrient availability. During rapid exponential growth, CodY is highly active and represses genes whose products allow adaptation to nutrient depletion. In Geobacillus thermodenitrificans (strain NG80-2), this protein is Global transcriptional regulator CodY.